Consider the following 575-residue polypeptide: Isocitrate dehydrogenase kinase/phosphatase (575 aa).

ATP-binding positions include 315 to 321 (APGIRGM) and K336. D371 is a catalytic residue.

This sequence belongs to the AceK family.

It localises to the cytoplasm. The enzyme catalyses L-seryl-[isocitrate dehydrogenase] + ATP = O-phospho-L-seryl-[isocitrate dehydrogenase] + ADP + H(+). Bifunctional enzyme which can phosphorylate or dephosphorylate isocitrate dehydrogenase (IDH) on a specific serine residue. This is a regulatory mechanism which enables bacteria to bypass the Krebs cycle via the glyoxylate shunt in response to the source of carbon. When bacteria are grown on glucose, IDH is fully active and unphosphorylated, but when grown on acetate or ethanol, the activity of IDH declines drastically concomitant with its phosphorylation. The sequence is that of Isocitrate dehydrogenase kinase/phosphatase from Citrobacter koseri (strain ATCC BAA-895 / CDC 4225-83 / SGSC4696).